Consider the following 119-residue polypeptide: Large ribosomal subunit protein uL24 (119 aa).

The protein belongs to the universal ribosomal protein uL24 family. In terms of assembly, part of the 50S ribosomal subunit.

One of two assembly initiator proteins, it binds directly to the 5'-end of the 23S rRNA, where it nucleates assembly of the 50S subunit. Functionally, one of the proteins that surrounds the polypeptide exit tunnel on the outside of the subunit. The protein is Large ribosomal subunit protein uL24 of Clavibacter sepedonicus (Clavibacter michiganensis subsp. sepedonicus).